The primary structure comprises 125 residues: Splicing factor 3B subunit 6 (125 aa).

The segment at 16-29 is interaction with pre-mRNA branch site; sequence EVNRILYIRNLPYK. The RRM domain occupies 19-94; it reads RILYIRNLPY…RYLVVLYYNA (76 aa). Lysine 29 is subject to N6-acetyllysine; alternate. Lysine 29 participates in a covalent cross-link: Glycyl lysine isopeptide (Lys-Gly) (interchain with G-Cter in SUMO2); alternate. Residue lysine 41 is modified to N6-acetyllysine.

Component of the 17S U2 SnRNP complex, a ribonucleoprotein complex that contains small nuclear RNA (snRNA) U2 and a number of specific proteins. Part of the SF3B subcomplex of the 17S U2 SnRNP complex. SF3B associates with the splicing subcomplex SF3A and a 12S RNA unit to form the U2 small nuclear ribonucleoproteins complex (U2 snRNP). Within the SF3B complex interacts directly with SF3B1. Component of the minor spliceosome, which splices U12-type introns.

The protein localises to the nucleus. Component of the 17S U2 SnRNP complex of the spliceosome, a large ribonucleoprotein complex that removes introns from transcribed pre-mRNAs. The 17S U2 SnRNP complex (1) directly participates in early spliceosome assembly and (2) mediates recognition of the intron branch site during pre-mRNA splicing by promoting the selection of the pre-mRNA branch-site adenosine, the nucleophile for the first step of splicing. Within the 17S U2 SnRNP complex, SF3B6 is part of the SF3B subcomplex, which is required for 'A' complex assembly formed by the stable binding of U2 snRNP to the branchpoint sequence in pre-mRNA. Sequence independent binding of SF3A and SF3B subcomplexes upstream of the branch site is essential, it may anchor U2 snRNP to the pre-mRNA. Within the 17S U2 SnRNP complex, SF3B6 directly contacts the pre-mRNA branch site adenosine for the first catalytic step of splicing. SF3B6 stabilizes the intron branch site-U2 snRNA duplex, thereby promoting-binding of introns with poor sequence complementarity. Also acts as a component of the minor spliceosome, which is involved in the splicing of U12-type introns in pre-mRNAs. This chain is Splicing factor 3B subunit 6 (Sf3b6), found in Mus musculus (Mouse).